The sequence spans 168 residues: Alpha-N-acetylgalactosamine-specific lectin (168 aa).

The signal sequence occupies residues 1–18 (MAFFRALCFVLLVGFAAA). The 126-residue stretch at 38–163 (YNGNCYRYFG…CSRAFAYVCK (126 aa)) folds into the C-type lectin domain. 2 disulfide bridges follow: cysteine 59–cysteine 162 and cysteine 136–cysteine 154.

Monomer, homodimer and homooligomer.

Its function is as follows. Alpha-N-acetylgalactosamine-specific lectin. The oligomeric form has Ca(2+)-dependent hemagglutination activity towards sheep erythrocytes. Its hemagglutination activity is inhibited by various monosaccharides, oligosaccharides and glycopeptides, including inhibition by GalNAc, blood group A trisaccharide, Tn antigen, mucin and asialomucin. The protein is Alpha-N-acetylgalactosamine-specific lectin of Patiria pectinifera (Starfish).